A 139-amino-acid polypeptide reads, in one-letter code: MPLLTVDVVTAEERLYQGTAKFVVVPGTEGELGILPGHEPLLTRLRPGTVRVTLENDDEVILFVAGGFAHILPQEVILLADTAVRARDLDEAKAQQARKAAEELLQNSRSKIDYARAQAELAEAVAQLAAIERARRRRR.

Belongs to the ATPase epsilon chain family. As to quaternary structure, F-type ATPases have 2 components, CF(1) - the catalytic core - and CF(0) - the membrane proton channel. CF(1) has five subunits: alpha(3), beta(3), gamma(1), delta(1), epsilon(1). CF(0) has three main subunits: a, b and c.

The protein resides in the cell inner membrane. Produces ATP from ADP in the presence of a proton gradient across the membrane. This Ralstonia nicotianae (strain ATCC BAA-1114 / GMI1000) (Ralstonia solanacearum) protein is ATP synthase epsilon chain 2 (atpC2).